The chain runs to 491 residues: 2-aminomuconic 6-semialdehyde dehydrogenase (491 aa).

Residues Glu252 and Cys286 contribute to the active site.

Belongs to the aldehyde dehydrogenase family. As to quaternary structure, homotrimer.

The catalysed reaction is 2-aminomuconate 6-semialdehyde + NAD(+) + H2O = (2Z,4E)-2-aminomuconate + NADH + 2 H(+). Strongly inhibited by Ag(+) and Hg(+), and comnpletely inhibited by p-chloromercuribenzoic acid. Involved in the modified meta-cleavage pathway for 2-aminophenol catabolism. The enzyme is also active toward 2-hydroxymuconic 6-semialdehyde, acetaldehyde, propionaldehyde, and butyraldehyde. This is 2-aminomuconic 6-semialdehyde dehydrogenase (amnC) from Pseudomonas sp.